The following is a 329-amino-acid chain: Cathepsin K (329 aa).

Residues 1-15 (MWGLKVLLLPVVSFA) form the signal peptide. Positions 16–114 (LYPEEILDTH…TLYIPEWEGR (99 aa)) are cleaved as a propeptide — activation peptide. A glycan (N-linked (GlcNAc...) asparagine) is linked at N103. 3 cysteine pairs are disulfide-bonded: C136–C177, C170–C210, and C269–C318. Residue C139 is part of the active site. Residues H276 and N296 contribute to the active site.

This sequence belongs to the peptidase C1 family. In terms of tissue distribution, predominantly expressed in osteoclasts (bones). Expressed in thyroid epithelial cells.

It is found in the lysosome. The protein resides in the secreted. The protein localises to the apical cell membrane. It carries out the reaction Broad proteolytic activity. With small-molecule substrates and inhibitors, the major determinant of specificity is P2, which is preferably Leu, Met &gt; Phe, and not Arg.. In terms of biological role, thiol protease involved in osteoclastic bone resorption and may participate partially in the disorder of bone remodeling. Displays potent endoprotease activity against fibrinogen at acid pH. May play an important role in extracellular matrix degradation. Involved in the release of thyroid hormone thyroxine (T4) by limited proteolysis of TG/thyroglobulin in the thyroid follicle lumen. This is Cathepsin K (CTSK) from Homo sapiens (Human).